Reading from the N-terminus, the 133-residue chain is Antifungal protein ginkbilobin-like protein 2 (133 aa).

The signal sequence occupies residues 1–24; that stretch reads MSMGSFGFALAVMVLAVLVASAAG. The 106-residue stretch at 28 to 133 folds into the Gnk2-homologous domain; it reads TNLVSSACNG…CFIRYEQYSI (106 aa). N36 is a binding site for alpha-D-mannopyranose. 2 cysteine pairs are disulfide-bonded: C87–C96 and C99–C124. Residues R118 and E129 each coordinate alpha-D-mannopyranose.

Functionally, exerts antifungal activity through its carbohydrate-binding specificity. The protein is Antifungal protein ginkbilobin-like protein 2 of Picea glauca (White spruce).